Here is a 1260-residue protein sequence, read N- to C-terminus: uncharacterized protein (1260 aa).

It belongs to the oxoprolinase family.

This is an uncharacterized protein from Schizosaccharomyces pombe (strain 972 / ATCC 24843) (Fission yeast).